The sequence spans 414 residues: Alanine--glyoxylate aminotransferase (414 aa).

Residues M1–M23 constitute a mitochondrion transit peptide. An N6-(pyridoxal phosphate)lysine modification is found at K231. N6-acetyllysine occurs at positions 256 and 334. A substrate-binding site is contributed by R382.

This sequence belongs to the class-V pyridoxal-phosphate-dependent aminotransferase family. In terms of assembly, homodimer. It depends on pyridoxal 5'-phosphate as a cofactor.

Its subcellular location is the peroxisome. It is found in the mitochondrion matrix. The enzyme catalyses L-serine + pyruvate = 3-hydroxypyruvate + L-alanine. It catalyses the reaction glyoxylate + L-alanine = glycine + pyruvate. Catalyzes the transamination of glyoxylate to glycine and contributes to the glyoxylate detoxification. Its function is as follows. Catalyzes the transamination between L-serine and pyruvate and weakly contributes to gluconeogenesis from the L-serine metabolism. The polypeptide is Alanine--glyoxylate aminotransferase (Callithrix jacchus (White-tufted-ear marmoset)).